A 306-amino-acid chain; its full sequence is Agmatinase (306 aa).

Mn(2+) is bound by residues H126, D149, H151, D153, D230, and D232.

Belongs to the arginase family. Agmatinase subfamily. Mn(2+) is required as a cofactor.

The catalysed reaction is agmatine + H2O = urea + putrescine. It participates in amine and polyamine biosynthesis; putrescine biosynthesis via agmatine pathway; putrescine from agmatine: step 1/1. Its function is as follows. Catalyzes the formation of putrescine from agmatine. The sequence is that of Agmatinase from Escherichia coli O1:K1 / APEC.